Consider the following 572-residue polypeptide: Urease subunit alpha (572 aa).

A Urease domain is found at 134-572 (GGIDAHVHFI…LPMAQRYFLF (439 aa)). Ni(2+) contacts are provided by His139, His141, and Lys222. Residue Lys222 is modified to N6-carboxylysine. His224 is a substrate binding site. Positions 251 and 277 each coordinate Ni(2+). The active-site Proton donor is His325. Asp365 contributes to the Ni(2+) binding site.

Belongs to the metallo-dependent hydrolases superfamily. Urease alpha subunit family. In terms of assembly, heterotrimer of UreA (gamma), UreB (beta) and UreC (alpha) subunits. Three heterotrimers associate to form the active enzyme. Ni cation is required as a cofactor. Carboxylation allows a single lysine to coordinate two nickel ions.

The protein localises to the cytoplasm. The enzyme catalyses urea + 2 H2O + H(+) = hydrogencarbonate + 2 NH4(+). Its pathway is nitrogen metabolism; urea degradation; CO(2) and NH(3) from urea (urease route): step 1/1. In Synechococcus sp. (strain JA-2-3B'a(2-13)) (Cyanobacteria bacterium Yellowstone B-Prime), this protein is Urease subunit alpha.